The sequence spans 503 residues: Maturase K (503 aa).

Belongs to the intron maturase 2 family. MatK subfamily.

The protein localises to the plastid. Its subcellular location is the chloroplast. Usually encoded in the trnK tRNA gene intron. Probably assists in splicing its own and other chloroplast group II introns. The protein is Maturase K of Kunzea pulchella (Red kunzea).